The sequence spans 745 residues: Poly(A) polymerase alpha (745 aa).

Residues 1–17 (MPFPVTTQGSQQTQPPQ) show a composition bias toward low complexity. The interval 1 to 22 (MPFPVTTQGSQQTQPPQKHYGI) is disordered. Phosphoserine is present on residues Ser-10 and Ser-24. ATP contacts are provided by residues 100–102 (FGS), Thr-109, 113–115 (DID), Asp-167, Lys-228, Tyr-237, and 246–247 (GV). Asp-113, Asp-115, and Asp-167 together coordinate Mg(2+). Glycyl lysine isopeptide (Lys-Gly) (interchain with G-Cter in SUMO) cross-links involve residues Lys-444, Lys-445, Lys-506, and Lys-507. The short motif at 490 to 507 (RKQLHQLLPNHVLQKKKK) is the Nuclear localization signal 1 element. The segment at 508-643 (HSTEGVKLTA…TSGNAATKIP (136 aa)) is ser/Thr-rich. Residues 523–534 (LDLSMDSDNSMS) are compositionally biased toward low complexity. Disordered regions lie at residues 523-565 (LDLS…AVTA) and 577-704 (SVPQ…SETI). The span at 535-557 (VPSPTSATKTSPLNSSGSSQGRN) shows a compositional bias: polar residues. Residues Ser-537 and Ser-558 each carry the phosphoserine modification. 2 stretches are compositionally biased toward low complexity: residues 583–594 (SSESSGGTSSES) and 611–640 (TVSR…NAAT). Lys-641 and Lys-650 each carry N6-acetyllysine. The Nuclear localization signal 2 signature appears at 650-665 (KRTSSPHKEESPKKTK). 2 stretches are compositionally biased toward basic and acidic residues: residues 655–666 (PHKEESPKKTKT) and 682–692 (GHDKTEAKEQL). Residues 677 to 745 (CLALSGHDKT…KNSIKLRLNR (69 aa)) form a required for interaction with NUDT21 region. Residues 694 to 704 (TETSTTQSETI) show a composition bias toward low complexity. Lys-736 is subject to N6-acetyllysine; alternate. Lys-736 is covalently cross-linked (Glycyl lysine isopeptide (Lys-Gly) (interchain with G-Cter in SUMO); alternate). Phosphoserine is present on Ser-738. Residue Lys-740 is modified to N6-acetyllysine; alternate. Residue Lys-740 forms a Glycyl lysine isopeptide (Lys-Gly) (interchain with G-Cter in SUMO); alternate linkage.

Belongs to the poly(A) polymerase family. As to quaternary structure, monomer. Found in a complex with CPSF1, FIP1L1 and PAPOLA. Interacts with AHCYL1 and FIP1L1; the interaction with AHCYL1 seems to increase interaction with FIP1L1. Interacts with NUDT21; the interaction is diminished by acetylation. Interacts with KPNB1; the interaction promotes PAP nuclear import and is inhibited by acetylation of PAP. Requires Mg(2+) as cofactor. Mn(2+) serves as cofactor. In terms of processing, polysumoylated. Varying sumoylation depending on tissue- and cell-type. Highly sumoylated in bladder and NIH 3T3 cells. Sumoylation is required for nuclear localization and enhances PAP stability. Desumoylated by SENP1. Inhibits polymerase activity. Post-translationally, hyperphosphorylation on multiple CDK2 consensus and non-consensus sites in the C-terminal Ser/Thr-rich region represses PAP activity in late M-phase. Phosphorylation/dephosphorylation may regulate the interaction between PAP and CPSF. Acetylated in the C-terminus. Acetylation decreases interaction with NUDT21 and KPNB1, and inhibits nuclear localization through inhibiting binding to the importin alpha/beta complex.

It localises to the cytoplasm. The protein resides in the nucleus. It catalyses the reaction RNA(n) + ATP = RNA(n)-3'-adenine ribonucleotide + diphosphate. In terms of biological role, polymerase that creates the 3'-poly(A) tail of mRNA's. Also required for the endoribonucleolytic cleavage reaction at some polyadenylation sites. May acquire specificity through interaction with a cleavage and polyadenylation specificity factor (CPSF) at its C-terminus. The chain is Poly(A) polymerase alpha (PAPOLA) from Homo sapiens (Human).